We begin with the raw amino-acid sequence, 258 residues long: tRNA pseudouridine synthase A (258 aa).

Catalysis depends on aspartate 54, which acts as the Nucleophile. Tyrosine 112 is a substrate binding site.

Belongs to the tRNA pseudouridine synthase TruA family. Homodimer.

The catalysed reaction is uridine(38/39/40) in tRNA = pseudouridine(38/39/40) in tRNA. Formation of pseudouridine at positions 38, 39 and 40 in the anticodon stem and loop of transfer RNAs. This chain is tRNA pseudouridine synthase A, found in Geobacillus kaustophilus (strain HTA426).